The sequence spans 313 residues: tRNA dimethylallyltransferase (313 aa).

10 to 17 (GPTASGKT) lines the ATP pocket. Substrate is bound at residue 12-17 (TASGKT). 3 interaction with substrate tRNA regions span residues 35 to 38 (DSAM), 159 to 163 (QRIQR), and 240 to 245 (RCVGYR).

Belongs to the IPP transferase family. In terms of assembly, monomer. It depends on Mg(2+) as a cofactor.

It catalyses the reaction adenosine(37) in tRNA + dimethylallyl diphosphate = N(6)-dimethylallyladenosine(37) in tRNA + diphosphate. Its function is as follows. Catalyzes the transfer of a dimethylallyl group onto the adenine at position 37 in tRNAs that read codons beginning with uridine, leading to the formation of N6-(dimethylallyl)adenosine (i(6)A). The sequence is that of tRNA dimethylallyltransferase from Legionella pneumophila (strain Paris).